The primary structure comprises 323 residues: Delta-aminolevulinic acid dehydratase (323 aa).

Zn(2+)-binding residues include cysteine 118, cysteine 120, and cysteine 128. The active-site Schiff-base intermediate with substrate is lysine 193. 5-aminolevulinate is bound by residues arginine 203 and arginine 215. Residue glutamate 231 participates in Mg(2+) binding. Lysine 246 (schiff-base intermediate with substrate) is an active-site residue. 5-aminolevulinate-binding residues include serine 272 and tyrosine 311.

It belongs to the ALAD family. As to quaternary structure, homooctamer. Requires Zn(2+) as cofactor.

The catalysed reaction is 2 5-aminolevulinate = porphobilinogen + 2 H2O + H(+). The protein operates within porphyrin-containing compound metabolism; protoporphyrin-IX biosynthesis; coproporphyrinogen-III from 5-aminolevulinate: step 1/4. Functionally, catalyzes an early step in the biosynthesis of tetrapyrroles. Binds two molecules of 5-aminolevulinate per subunit, each at a distinct site, and catalyzes their condensation to form porphobilinogen. This Helicobacter pylori (strain J99 / ATCC 700824) (Campylobacter pylori J99) protein is Delta-aminolevulinic acid dehydratase (hemB).